Reading from the N-terminus, the 1061-residue chain is Ribonuclease E (1061 aa).

Positions 39-119 (ANIYKGKITR…GNKGAALTTF (81 aa)) constitute an S1 motif domain. The tract at residues 57-112 (FVDYGAERHGFLPLKEIAREYFPANYSAHGRPNIKDVLREGQEVIVQIDKEERGNK) is interaction with RNA. Residues 169–170 (RT) form an interaction with RNA 5'-terminal monophosphate region. D303 and D346 together coordinate Mg(2+). 2 residues coordinate Zn(2+): C404 and C407. The interval 404–407 (CPRC) is required for zinc-mediated homotetramerization and catalytic activity. Disordered regions lie at residues 532 to 565 (FAMP…PAAP), 586 to 731 (EETK…KVRY), and 752 to 822 (EPIV…RYPT). Residues 536 to 546 (DVPPAPTPAEP) show a composition bias toward pro residues. Positions 547-565 (AAPVVAPAPKAAPATPAAP) are enriched in low complexity. 3 stretches are compositionally biased toward basic and acidic residues: residues 598 to 608 (AEAKPERQQDR), 615 to 640 (NRRD…EENR), and 652 to 690 (ETRE…KRQA). Positions 796–814 (RRSRRSPRHLRVSGQRRRR) are enriched in basic residues. The tract at residues 833-850 (ASPELASGKVWIRYPIVR) is interaction with enolase. The interval 1021–1061 (EAPRHSDWQRPTFAFEGKGAAGGHTATHHASAAPARPQPVE) is interaction with PNPase. Residues 1031–1061 (PTFAFEGKGAAGGHTATHHASAAPARPQPVE) are disordered. The span at 1043 to 1055 (GHTATHHASAAPA) shows a compositional bias: low complexity.

This sequence belongs to the RNase E/G family. RNase E subfamily. In terms of assembly, component of the RNA degradosome, which is a multiprotein complex involved in RNA processing and mRNA degradation. Within the RNA degradosome, RNase E assembles into a homotetramer formed by a dimer of dimers. Tetramerization is essential for catalytic activity, but not for RNA-binding. Interacts with RhlB, PNPase (pnp) and enolase (eno). Interacts with DeaD at reduced temperature. The cofactor is Zn(2+). Mg(2+) serves as cofactor.

The protein localises to the cytoplasm. It is found in the cell inner membrane. The catalysed reaction is Endonucleolytic cleavage of single-stranded RNA in A- and U-rich regions.. With respect to regulation, the presence of a 5'-monophosphate on substrate RNA accelerates its cleavage by catalytically activating the enzyme. Binding to the membrane stabilizes protein structure and increases affinity for the substrate. In terms of biological role, endoribonuclease that plays a central role in RNA processing and decay. Required for the maturation of 5S and 16S rRNAs and the majority of tRNAs. Also involved in the degradation of most mRNAs. Can also process other RNA species, such as RNAI, a molecule that controls the replication of ColE1 plasmid, and the cell division inhibitor DicF-RNA. It initiates the decay of RNAs by cutting them internally near their 5'-end. It is able to remove poly(A) tails by an endonucleolytic process. Required to initiate rRNA degradation during both starvation and quality control; acts after RNase PH (rph) exonucleolytically digests the 3'-end of the 16S rRNA. Degradation of 16S rRNA leads to 23S rRNA degradation. Processes the 3 tRNA(Pro) precursors immediately after the 3'-CCA to generate the mature ends. Its function is as follows. Prefers 5'-monophosphorylated substrates over 5'-triphosphorylated substrates. 5'-monophosphate-assisted cleavage requires at least 2 and preferably 3 or more unpaired 5'-terminal nucleotides. The optimal spacing between the 5' end and the scissile phosphate appears to be 8 nucleotides. Any sequence of unpaired nucleotides at the 5'-end is tolerated. This chain is Ribonuclease E, found in Escherichia coli (strain K12).